Reading from the N-terminus, the 334-residue chain is Replication factor C small subunit (334 aa).

ATP is bound at residue 49–56; that stretch reads GPPGVGKT.

It belongs to the activator 1 small subunits family. RfcS subfamily. In terms of assembly, heteromultimer composed of small subunits (RfcS) and large subunits (RfcL).

Functionally, part of the RFC clamp loader complex which loads the PCNA sliding clamp onto DNA. The polypeptide is Replication factor C small subunit (Methanosarcina barkeri (strain Fusaro / DSM 804)).